A 266-amino-acid chain; its full sequence is MPQVTMRQMLEAGVHFGHQTRYRHPKMSPNIFGARGKIHIINLEKTVPLFNDAMNFLSAVAQKRGSVLFVGTKRSARDAIKEEAERCGMPYMIQRWLGGTLTNFRTVKQSVARLKELELAETDGTFSKLVKHEVLRLRRESGKLQASLGGIKDMNRIPDAIFVIDIGHEDIAIKEAKKLGIPVVAVVDTNYDPSLVDYPIPGNDDAIRAVQLYARAAADAVLEGKAAMPNAAAVREEEFASAPDAGKKGRQAQPKKGKRASDAAAE.

The segment at 233–266 (AVREEEFASAPDAGKKGRQAQPKKGKRASDAAAE) is disordered. A compositionally biased stretch (basic residues) spans 248-258 (KGRQAQPKKGK).

It belongs to the universal ribosomal protein uS2 family.

This Xylella fastidiosa (strain M23) protein is Small ribosomal subunit protein uS2.